We begin with the raw amino-acid sequence, 116 residues long: Putative iron-sulfur cluster insertion protein ErpA (116 aa).

Iron-sulfur cluster is bound by residues C44, C108, and C110.

Belongs to the HesB/IscA family. As to quaternary structure, homodimer. Iron-sulfur cluster is required as a cofactor.

In terms of biological role, required for insertion of 4Fe-4S clusters. The chain is Putative iron-sulfur cluster insertion protein ErpA from Dechloromonas aromatica (strain RCB).